The sequence spans 239 residues: Suppressor of organelle fusion 1 (239 aa).

The protein belongs to the WD repeat WDR91 family. As to quaternary structure, interacts with sorf-2; the interaction is direct. Interacts with bec-1.

It localises to the early endosome. The protein resides in the late endosome. The protein localises to the cytoplasm. Functionally, together with sorf-2 negatively regulates the levels of phosphatidylinositol 3-phosphate (PtdIns3P) to enable the conversion of early endosomes to late endosomes. Binds to sorf-2 and the sorf-1-sorf-2 complex likely acts through bec-1, a non-catalytic subunit of phosphatidylinositol 3-kinase (PI3K), to suppress PI3K activity, thereby negatively regulating endosomal PtdIns3P levels. The sequence is that of Suppressor of organelle fusion 1 from Caenorhabditis elegans.